The sequence spans 176 residues: ATP-dependent protease subunit HslV (176 aa).

Residue Thr5 is part of the active site. The Na(+) site is built by Gly161, Cys164, and Thr167.

This sequence belongs to the peptidase T1B family. HslV subfamily. As to quaternary structure, a double ring-shaped homohexamer of HslV is capped on each side by a ring-shaped HslU homohexamer. The assembly of the HslU/HslV complex is dependent on binding of ATP.

The protein resides in the cytoplasm. The enzyme catalyses ATP-dependent cleavage of peptide bonds with broad specificity.. Allosterically activated by HslU binding. Protease subunit of a proteasome-like degradation complex believed to be a general protein degrading machinery. This chain is ATP-dependent protease subunit HslV, found in Sulfurovum sp. (strain NBC37-1).